A 166-amino-acid chain; its full sequence is Interferon gamma (166 aa).

The signal sequence occupies residues 1–23; the sequence is MNYTSFILAFQLCAILGSSTYYC. Pyrrolidone carboxylic acid is present on Gln-24. N-linked (GlcNAc...) asparagine glycosylation is found at Asn-39 and Asn-106. The disordered stretch occupies residues 147-166; the sequence is ANLRKRKRSQNPFRGRRALQ. Residues 148 to 166 show a composition bias toward basic residues; sequence NLRKRKRSQNPFRGRRALQ.

Belongs to the type II (or gamma) interferon family. Homodimer. Interacts with IFNGR1 (via extracellular domain); this interaction promotes IFNGR1 dimerization. Released primarily from activated T lymphocytes.

The protein resides in the secreted. Functionally, type II interferon produced by immune cells such as T-cells and NK cells that plays crucial roles in antimicrobial, antiviral, and antitumor responses by activating effector immune cells and enhancing antigen presentation. Primarily signals through the JAK-STAT pathway after interaction with its receptor IFNGR1 to affect gene regulation. Upon IFNG binding, IFNGR1 intracellular domain opens out to allow association of downstream signaling components JAK2, JAK1 and STAT1, leading to STAT1 activation, nuclear translocation and transcription of IFNG-regulated genes. Many of the induced genes are transcription factors such as IRF1 that are able to further drive regulation of a next wave of transcription. Plays a role in class I antigen presentation pathway by inducing a replacement of catalytic proteasome subunits with immunoproteasome subunits. In turn, increases the quantity, quality, and repertoire of peptides for class I MHC loading. Increases the efficiency of peptide generation also by inducing the expression of activator PA28 that associates with the proteasome and alters its proteolytic cleavage preference. Up-regulates as well MHC II complexes on the cell surface by promoting expression of several key molecules such as cathepsins B/CTSB, H/CTSH, and L/CTSL. Participates in the regulation of hematopoietic stem cells during development and under homeostatic conditions by affecting their development, quiescence, and differentiation. The polypeptide is Interferon gamma (IFNG) (Equus caballus (Horse)).